The following is a 205-amino-acid chain: SCO2-like protein RC0895 (205 aa).

Residues Cys-82, Cys-86, and His-172 each coordinate Cu cation.

Belongs to the SCO1/2 family.

In Rickettsia conorii (strain ATCC VR-613 / Malish 7), this protein is SCO2-like protein RC0895.